Reading from the N-terminus, the 196-residue chain is UPF0215 protein MM_1007 (196 aa).

Belongs to the UPF0215 family.

The polypeptide is UPF0215 protein MM_1007 (Methanosarcina mazei (strain ATCC BAA-159 / DSM 3647 / Goe1 / Go1 / JCM 11833 / OCM 88) (Methanosarcina frisia)).